Here is a 239-residue protein sequence, read N- to C-terminus: 2-C-methyl-D-erythritol 4-phosphate cytidylyltransferase (239 aa).

This sequence belongs to the IspD/TarI cytidylyltransferase family. IspD subfamily. As to quaternary structure, homodimer.

It catalyses the reaction 2-C-methyl-D-erythritol 4-phosphate + CTP + H(+) = 4-CDP-2-C-methyl-D-erythritol + diphosphate. It functions in the pathway isoprenoid biosynthesis; isopentenyl diphosphate biosynthesis via DXP pathway; isopentenyl diphosphate from 1-deoxy-D-xylulose 5-phosphate: step 2/6. Functionally, catalyzes the formation of 4-diphosphocytidyl-2-C-methyl-D-erythritol from CTP and 2-C-methyl-D-erythritol 4-phosphate (MEP). The sequence is that of 2-C-methyl-D-erythritol 4-phosphate cytidylyltransferase from Sodalis glossinidius (strain morsitans).